The sequence spans 346 residues: Histidinol-phosphate aminotransferase (346 aa).

Lys209 carries the post-translational modification N6-(pyridoxal phosphate)lysine.

The protein belongs to the class-II pyridoxal-phosphate-dependent aminotransferase family. Histidinol-phosphate aminotransferase subfamily. Homodimer. It depends on pyridoxal 5'-phosphate as a cofactor.

It catalyses the reaction L-histidinol phosphate + 2-oxoglutarate = 3-(imidazol-4-yl)-2-oxopropyl phosphate + L-glutamate. The protein operates within amino-acid biosynthesis; L-histidine biosynthesis; L-histidine from 5-phospho-alpha-D-ribose 1-diphosphate: step 7/9. The protein is Histidinol-phosphate aminotransferase of Aliivibrio fischeri (strain ATCC 700601 / ES114) (Vibrio fischeri).